A 205-amino-acid chain; its full sequence is N-(5'-phosphoribosyl)anthranilate isomerase (205 aa).

It belongs to the TrpF family.

The catalysed reaction is N-(5-phospho-beta-D-ribosyl)anthranilate = 1-(2-carboxyphenylamino)-1-deoxy-D-ribulose 5-phosphate. Its pathway is amino-acid biosynthesis; L-tryptophan biosynthesis; L-tryptophan from chorismate: step 3/5. The protein is N-(5'-phosphoribosyl)anthranilate isomerase of Acidiphilium cryptum (strain JF-5).